We begin with the raw amino-acid sequence, 107 residues long: MTHKRTKRQPAIAAGLNAPRRNRVGRQHGWPADVPSAEQRRAQRQRDLEAIRRAYAEMVATSHEIDDDTAELALLSMHLDDEQRRLEAGMKLGWHPYHFPDEPDSKQ.

The tract at residues 1–42 (MTHKRTKRQPAIAAGLNAPRRNRVGRQHGWPADVPSAEQRRA) is disordered.

Functionally, toxic component of a type II toxin-antitoxin (TA) system. Its toxic effect is neutralized by coexpression with cognate antitoxin MT2731. The protein is Toxin MT2730 of Mycobacterium tuberculosis (strain CDC 1551 / Oshkosh).